A 777-amino-acid polypeptide reads, in one-letter code: 1,4-alpha-glucan branching enzyme GlgB (777 aa).

Aspartate 408 functions as the Nucleophile in the catalytic mechanism. Residue glutamate 461 is the Proton donor of the active site.

Belongs to the glycosyl hydrolase 13 family. GlgB subfamily. Monomer.

The catalysed reaction is Transfers a segment of a (1-&gt;4)-alpha-D-glucan chain to a primary hydroxy group in a similar glucan chain.. The protein operates within glycan biosynthesis; glycogen biosynthesis. Catalyzes the formation of the alpha-1,6-glucosidic linkages in glycogen by scission of a 1,4-alpha-linked oligosaccharide from growing alpha-1,4-glucan chains and the subsequent attachment of the oligosaccharide to the alpha-1,6 position. This Actinobacillus pleuropneumoniae serotype 7 (strain AP76) protein is 1,4-alpha-glucan branching enzyme GlgB.